The chain runs to 166 residues: Photosystem I assembly protein Ycf3 (166 aa).

TPR repeat units follow at residues 35-68 (AFTY…EIDA), 72-105 (SYML…NPRL), and 120-153 (GEQA…SPTS).

It belongs to the Ycf3 family.

Its subcellular location is the plastid. It is found in the chloroplast thylakoid membrane. In terms of biological role, essential for the assembly of the photosystem I (PSI) complex. May act as a chaperone-like factor to guide the assembly of the PSI subunits. The sequence is that of Photosystem I assembly protein Ycf3 from Bigelowiella natans (Pedinomonas minutissima).